Reading from the N-terminus, the 810-residue chain is Coiled-coil domain-containing protein 15 (810 aa).

Coiled coils occupy residues V65–R89, D160–T189, and M638–R669.

In terms of assembly, interacts with POC5, POC1B, CETN2 and FAM161A.

It localises to the cytoplasm. Its subcellular location is the cytoskeleton. It is found in the microtubule organizing center. The protein resides in the centrosome. The protein localises to the centriole. It localises to the centriolar satellite. Plays an important role in primary cilium assembly, maintenance, and length regulation. Interacts with centriole inner scaffold proteins to promote proper centriole size and integrity and assembly of functional cilia. Required for the recruitment of both the inner scaffold protein POC1B and the distal SFI1/CETN2 complex to centrioles. The protein is Coiled-coil domain-containing protein 15 (Ccdc15) of Mus musculus (Mouse).